The following is a 335-amino-acid chain: Photosystem II assembly lipoprotein Ycf48 (335 aa).

The first 23 residues, M1–G23, serve as a signal peptide directing secretion. Residue C24 is the site of N-palmitoyl cysteine attachment. A lipid anchor (S-diacylglycerol cysteine) is attached at C24.

Belongs to the Ycf48 family. Part of early PSII assembly complexes which includes D1 (psbA) and PsbI; not found in mature PSII. Binds to the lumenal side of PSII complexes. Interacts with YidC.

It localises to the cellular thylakoid membrane. A factor required for optimal assembly of photosystem II (PSII), acting in the early stages of PSII assembly. Also plays a role in replacement of photodamaged D1 (psbA). Assists YidC in synthesis of chlorophyll-binding proteins. This chain is Photosystem II assembly lipoprotein Ycf48, found in Prochlorococcus marinus (strain MIT 9313).